We begin with the raw amino-acid sequence, 192 residues long: Recombination protein RecR (192 aa).

The C4-type zinc-finger motif lies at 51–66 (CQTCFHLSADPECEIC). One can recognise a Toprim domain in the interval 74–168 (GLICVVADSR…PVSRIAYGLP (95 aa)).

It belongs to the RecR family.

Functionally, may play a role in DNA repair. It seems to be involved in an RecBC-independent recombinational process of DNA repair. It may act with RecF and RecO. This Parasynechococcus marenigrum (strain WH8102) protein is Recombination protein RecR.